The primary structure comprises 239 residues: Tetraspanin-9 (239 aa).

3 helical membrane passes run 14 to 34 (FLFN…GIWL), 56 to 76 (LVIA…LGAI), and 86 to 106 (FFIV…LFFV). N-linked (GlcNAc...) asparagine glycans are attached at residues Asn180 and Asn181. A helical transmembrane segment spans residues 204 to 224 (VLGTVGMCLLITQILGMAFSM).

This sequence belongs to the tetraspanin (TM4SF) family. As to quaternary structure, found in a complex with GP6. Post-translationally, glycosylated.

The protein localises to the membrane. The sequence is that of Tetraspanin-9 (TSPAN9) from Ovis aries (Sheep).